Consider the following 429-residue polypeptide: Putative protease Do-like 14 (429 aa).

The disordered stretch occupies residues 87–113; it reads KSEAPINDEKGVSVEASDSSSKPSNGY. Residues 113–338 are serine protease; the sequence is YLGRDTIANA…IRPWIGLKMV (226 aa). Active-site charge relay system residues include His165, Asp203, and Ser281. The PDZ domain maps to 318-424; sequence IIEHFKKSGR…RVTLEVIPEE (107 aa).

This sequence belongs to the peptidase S1C family.

In terms of biological role, putative serine protease. The protein is Putative protease Do-like 14 (DEGP14) of Arabidopsis thaliana (Mouse-ear cress).